The following is a 195-amino-acid chain: Dynactin subunit 6 (195 aa).

The protein belongs to the dynactin subunits 5/6 family. Dynactin subunit 6 subfamily. In terms of assembly, member of the pointed-end complex of the dynactin shoulder complex which contains dctn4, dctn5 and dctn6 subunits and Actr10. Within the complex dctn6 forms a heterodimer with dctn5. Interacts with plk1.

It is found in the cytoplasm. It localises to the cytoskeleton. Its subcellular location is the chromosome. The protein resides in the centromere. The protein localises to the kinetochore. Its function is as follows. Part of the dynactin complex that activates the molecular motor dynein for ultra-processive transport along microtubules. The polypeptide is Dynactin subunit 6 (dctn6) (Danio rerio (Zebrafish)).